The following is a 349-amino-acid chain: Succinylglutamate desuccinylase (349 aa).

Residues histidine 70, glutamate 73, and histidine 166 each coordinate Zn(2+). Glutamate 229 is an active-site residue.

The protein belongs to the AspA/AstE family. Succinylglutamate desuccinylase subfamily. It depends on Zn(2+) as a cofactor.

It catalyses the reaction N-succinyl-L-glutamate + H2O = L-glutamate + succinate. The protein operates within amino-acid degradation; L-arginine degradation via AST pathway; L-glutamate and succinate from L-arginine: step 5/5. Its function is as follows. Transforms N(2)-succinylglutamate into succinate and glutamate. The chain is Succinylglutamate desuccinylase from Burkholderia pseudomallei (strain 1710b).